Here is a 183-residue protein sequence, read N- to C-terminus: Fetal and adult testis-expressed transcript protein (183 aa).

Residues 42–66 form a disordered region; sequence SRSRGASQKKQKLEQKAAGSASAKR. Residues 163–181 traverse the membrane as a helical segment; sequence TLIIAVLVSASIANLWLWM.

In terms of assembly, interacts with BIK and RNF183. Interacts with IMMT/MIC60and EMD. Testis-specific in fetus (aged from 6 to 11 weeks). In adult, expressed predominantly in testis, with some expression in lung, heart, kidney, adrenal gland and whole brain. Highly expressed in certain types of cancer tissues such as hepatocellular carcinoma, colon and gastric cancer. Weakly expressed in normal pancreas.

Its subcellular location is the mitochondrion. The protein localises to the mitochondrion outer membrane. It is found in the endoplasmic reticulum membrane. In terms of biological role, involved in the regulation of endoplasmic reticulum (ER)-mitochondria coupling. Negatively regulates the ER-mitochondria distance and Ca(2+) transfer from ER to mitochondria possibly implicating it in the regulation of apoptosis. May collaborate with RNF183 to restrain BIK protein levels thus regulating apoptotic signaling. The sequence is that of Fetal and adult testis-expressed transcript protein (FATE1) from Homo sapiens (Human).